Here is a 178-residue protein sequence, read N- to C-terminus: MEFFMKKVVFALTALALTSGTVFAAESGDGTVKFTGEIVDSPCVLSVDSQNQEVVLGQVQKSVFAAVGDKSPAKPFEIKLEDCDTTTMKKANVSFSGVGDADKSDLISVSTEAGAAKGVGIGIYDNSNTLVALNGGKASVDLSKGQTVLYFTANYVSTLATVTTGYGNAQVDFNLSYE.

The first 24 residues, Met-1–Ala-24, serve as a signal peptide directing secretion.

It belongs to the fimbrial protein family.

It localises to the fimbrium. Functionally, part of the lpfABCC'DE fimbrial operon. LP fimbriae may participate in the interaction with eukaryotic cells by assisting in microcolony formation. In Escherichia coli O157:H7, this protein is Probable major fimbrial subunit LpfA (lpfA).